A 149-amino-acid polypeptide reads, in one-letter code: MRAVVQRVSSSSVCVDGDIIGEIGVGFNVLIGISKDDTFEDLKYIKDKIINLRVFHDENDKMNLSLLDIKGEILVISQFTLYGDCRKGRRPNFMEAQGGEEAKKLYEEFLDLLKTSNLKVECGEFGADMKVKINNDGPVTILLDSKRNF.

The Gly-cisPro motif, important for rejection of L-amino acids motif lies at 137-138 (GP).

The protein belongs to the DTD family. In terms of assembly, homodimer.

The protein localises to the cytoplasm. It catalyses the reaction glycyl-tRNA(Ala) + H2O = tRNA(Ala) + glycine + H(+). It carries out the reaction a D-aminoacyl-tRNA + H2O = a tRNA + a D-alpha-amino acid + H(+). An aminoacyl-tRNA editing enzyme that deacylates mischarged D-aminoacyl-tRNAs. Also deacylates mischarged glycyl-tRNA(Ala), protecting cells against glycine mischarging by AlaRS. Acts via tRNA-based rather than protein-based catalysis; rejects L-amino acids rather than detecting D-amino acids in the active site. By recycling D-aminoacyl-tRNA to D-amino acids and free tRNA molecules, this enzyme counteracts the toxicity associated with the formation of D-aminoacyl-tRNA entities in vivo and helps enforce protein L-homochirality. The polypeptide is D-aminoacyl-tRNA deacylase (Clostridium beijerinckii (strain ATCC 51743 / NCIMB 8052) (Clostridium acetobutylicum)).